A 464-amino-acid polypeptide reads, in one-letter code: Protein FAM90A7 (464 aa).

Disordered regions lie at residues 1-42, 69-387, and 410-437; these read MMAR…DPRL, VPAT…AGHD, and AAPSFHSPEKPGAFLAQSPHVSEKSEAP. Composition is skewed to basic and acidic residues over residues 74-89 and 97-111; these read GKKEGKENLKPWKPRA and NKDKGEKEERPRQQD. Over residues 180-197 the composition is skewed to low complexity; sequence LASLSPLRKASLSSSSSL.

The protein belongs to the FAM90 family.

The polypeptide is Protein FAM90A7 (Homo sapiens (Human)).